Here is a 329-residue protein sequence, read N- to C-terminus: Glyceraldehyde-3-phosphate dehydrogenase 1 (329 aa).

Residues 11-12, Asp-33, and Glu-77 contribute to the NAD(+) site; that span reads RI. A Phosphoserine modification is found at Ser-148. D-glyceraldehyde 3-phosphate is bound at residue 148-150; sequence SCT. Cys-149 serves as the catalytic Nucleophile. Ser-177 bears the Phosphoserine mark. Thr-179 contacts D-glyceraldehyde 3-phosphate. Ser-200 carries the post-translational modification Phosphoserine. D-glyceraldehyde 3-phosphate is bound by residues 208–209 and Arg-231; that span reads TG. Residue Asn-313 participates in NAD(+) binding.

This sequence belongs to the glyceraldehyde-3-phosphate dehydrogenase family. In terms of assembly, homotetramer.

It is found in the cytoplasm. The catalysed reaction is D-glyceraldehyde 3-phosphate + phosphate + NAD(+) = (2R)-3-phospho-glyceroyl phosphate + NADH + H(+). It functions in the pathway carbohydrate degradation; glycolysis; pyruvate from D-glyceraldehyde 3-phosphate: step 1/5. This is Glyceraldehyde-3-phosphate dehydrogenase 1 from Kluyveromyces marxianus (Yeast).